The chain runs to 268 residues: Phosphatidylglycerol--prolipoprotein diacylglyceryl transferase (268 aa).

4 helical membrane-spanning segments follow: residues 23 to 43 (WYAL…LALA), 58 to 78 (FLTW…VLFY), 96 to 116 (GGMS…LFCW), and 119 to 139 (GLSP…GLFF). Residue R141 coordinates a 1,2-diacyl-sn-glycero-3-phospho-(1'-sn-glycerol). 3 helical membrane-spanning segments follow: residues 181–201 (SFLE…MPAV), 206–226 (GMTA…AEFF), and 238–258 (AGAT…VWLV).

It belongs to the Lgt family.

The protein localises to the cell inner membrane. It carries out the reaction L-cysteinyl-[prolipoprotein] + a 1,2-diacyl-sn-glycero-3-phospho-(1'-sn-glycerol) = an S-1,2-diacyl-sn-glyceryl-L-cysteinyl-[prolipoprotein] + sn-glycerol 1-phosphate + H(+). The protein operates within protein modification; lipoprotein biosynthesis (diacylglyceryl transfer). In terms of biological role, catalyzes the transfer of the diacylglyceryl group from phosphatidylglycerol to the sulfhydryl group of the N-terminal cysteine of a prolipoprotein, the first step in the formation of mature lipoproteins. The chain is Phosphatidylglycerol--prolipoprotein diacylglyceryl transferase from Azospirillum brasilense.